We begin with the raw amino-acid sequence, 186 residues long: Biofilm operon icaADBC HTH-type negative transcriptional regulator IcaR (186 aa).

In terms of domain architecture, HTH tetR-type spans M1 to L59. A DNA-binding region (H-T-H motif) is located at residues T22–F41.

As to quaternary structure, homodimer.

In terms of biological role, represses transcription of the icaADBC operon necessary for biofilm production. The chain is Biofilm operon icaADBC HTH-type negative transcriptional regulator IcaR (icaR) from Staphylococcus aureus (strain NCTC 8325 / PS 47).